A 174-amino-acid chain; its full sequence is Centrosomal protein 20 (174 aa).

Positions methionine 1–isoleucine 104 are necessary and sufficient for homooligomerization and localization to centrosomes and pericentriolar satellites. Residues glutamate 49–valine 81 form the LisH domain. The interval threonine 136–arginine 174 is disordered. Serine 144 carries the post-translational modification Phosphoserine. Residues arginine 145–glycine 157 show a composition bias toward basic and acidic residues.

It belongs to the CEP43 family. Homooligomer; probably required for localization to centrosomes. Forms a complex with KIAA0753/OFIP and OFD1; within this complex may stabilize the interaction between OFD1 and KIAA0753/OFIP. Interacts with PCM1; this interaction may be mediated by KIAA0753/OFIP.

The protein resides in the cytoplasm. It localises to the cytoskeleton. The protein localises to the microtubule organizing center. Its subcellular location is the centrosome. It is found in the centriole. The protein resides in the cell projection. It localises to the cilium. The protein localises to the cilium basal body. Its subcellular location is the cytoplasmic granule. It is found in the centriolar satellite. Involved in the biogenesis of cilia. Required for the recruitment of PLK1 to centrosomes and S phase progression. The sequence is that of Centrosomal protein 20 from Mus musculus (Mouse).